A 953-amino-acid polypeptide reads, in one-letter code: Isoleucine--tRNA ligase (953 aa).

A 'HIGH' region motif is present at residues proline 57 to histidine 67. Glutamate 582 contacts L-isoleucyl-5'-AMP. The 'KMSKS' region motif lies at lysine 623 to serine 627. Lysine 626 is an ATP binding site. 4 residues coordinate Zn(2+): cysteine 916, cysteine 919, cysteine 936, and cysteine 939.

This sequence belongs to the class-I aminoacyl-tRNA synthetase family. IleS type 1 subfamily. Monomer. Requires Zn(2+) as cofactor.

Its subcellular location is the cytoplasm. The enzyme catalyses tRNA(Ile) + L-isoleucine + ATP = L-isoleucyl-tRNA(Ile) + AMP + diphosphate. Its function is as follows. Catalyzes the attachment of isoleucine to tRNA(Ile). As IleRS can inadvertently accommodate and process structurally similar amino acids such as valine, to avoid such errors it has two additional distinct tRNA(Ile)-dependent editing activities. One activity is designated as 'pretransfer' editing and involves the hydrolysis of activated Val-AMP. The other activity is designated 'posttransfer' editing and involves deacylation of mischarged Val-tRNA(Ile). The polypeptide is Isoleucine--tRNA ligase (Bordetella bronchiseptica (strain ATCC BAA-588 / NCTC 13252 / RB50) (Alcaligenes bronchisepticus)).